Here is a 456-residue protein sequence, read N- to C-terminus: Methylenetetrahydrofolate--tRNA-(uracil-5-)-methyltransferase TrmFO (456 aa).

An FAD-binding site is contributed by 9 to 14 (GGGMAG).

This sequence belongs to the MnmG family. TrmFO subfamily. FAD is required as a cofactor.

The protein localises to the cytoplasm. It carries out the reaction uridine(54) in tRNA + (6R)-5,10-methylene-5,6,7,8-tetrahydrofolate + NADH + H(+) = 5-methyluridine(54) in tRNA + (6S)-5,6,7,8-tetrahydrofolate + NAD(+). The catalysed reaction is uridine(54) in tRNA + (6R)-5,10-methylene-5,6,7,8-tetrahydrofolate + NADPH + H(+) = 5-methyluridine(54) in tRNA + (6S)-5,6,7,8-tetrahydrofolate + NADP(+). In terms of biological role, catalyzes the folate-dependent formation of 5-methyl-uridine at position 54 (M-5-U54) in all tRNAs. The polypeptide is Methylenetetrahydrofolate--tRNA-(uracil-5-)-methyltransferase TrmFO (Novosphingobium aromaticivorans (strain ATCC 700278 / DSM 12444 / CCUG 56034 / CIP 105152 / NBRC 16084 / F199)).